A 227-amino-acid chain; its full sequence is MTDLSPVLTIDGPSGAGKGTVSRIVAARLGWHYLDSGALYRAVGVAASWADLDVSDPAALVRCTFDTKVEFDDAGEAGLRVLVNGADVTSELRLETTGALASAIAAIPEVRSALKERQRAFRRAPGLVADGRDMGTVIFPDAAFKVFLTASAEERAGRRHKQLMEKGVSVTFADLLREIMARDARDAQRVVAPLRSAKDAVLIDTSGIGVEDVVQRVVGLLADRTPS.

12-20 lines the ATP pocket; sequence GPSGAGKGT.

It belongs to the cytidylate kinase family. Type 1 subfamily.

It localises to the cytoplasm. The catalysed reaction is CMP + ATP = CDP + ADP. It catalyses the reaction dCMP + ATP = dCDP + ADP. The chain is Cytidylate kinase from Xanthomonas oryzae pv. oryzae (strain PXO99A).